Here is a 146-residue protein sequence, read N- to C-terminus: Putative nickel-responsive regulator 1 (146 aa).

Ni(2+) is bound by residues His-81, His-92, Tyr-94, and Cys-100.

It belongs to the transcriptional regulatory CopG/NikR family. It depends on Ni(2+) as a cofactor.

In terms of biological role, transcriptional regulator. The sequence is that of Putative nickel-responsive regulator 1 from Methanosarcina mazei (strain ATCC BAA-159 / DSM 3647 / Goe1 / Go1 / JCM 11833 / OCM 88) (Methanosarcina frisia).